The following is a 346-amino-acid chain: Phosphoribosylformylglycinamidine cyclo-ligase (346 aa).

The protein belongs to the AIR synthase family.

It is found in the cytoplasm. It catalyses the reaction 2-formamido-N(1)-(5-O-phospho-beta-D-ribosyl)acetamidine + ATP = 5-amino-1-(5-phospho-beta-D-ribosyl)imidazole + ADP + phosphate + H(+). It functions in the pathway purine metabolism; IMP biosynthesis via de novo pathway; 5-amino-1-(5-phospho-D-ribosyl)imidazole from N(2)-formyl-N(1)-(5-phospho-D-ribosyl)glycinamide: step 2/2. This chain is Phosphoribosylformylglycinamidine cyclo-ligase, found in Brevibacillus brevis (strain 47 / JCM 6285 / NBRC 100599).